A 301-amino-acid chain; its full sequence is 4-diphosphocytidyl-2-C-methyl-D-erythritol kinase (301 aa).

Residue Lys-10 is part of the active site. Residue Pro-96–Ser-106 participates in ATP binding. The active site involves Asp-138.

Belongs to the GHMP kinase family. IspE subfamily.

It carries out the reaction 4-CDP-2-C-methyl-D-erythritol + ATP = 4-CDP-2-C-methyl-D-erythritol 2-phosphate + ADP + H(+). It functions in the pathway isoprenoid biosynthesis; isopentenyl diphosphate biosynthesis via DXP pathway; isopentenyl diphosphate from 1-deoxy-D-xylulose 5-phosphate: step 3/6. Catalyzes the phosphorylation of the position 2 hydroxy group of 4-diphosphocytidyl-2C-methyl-D-erythritol. This is 4-diphosphocytidyl-2-C-methyl-D-erythritol kinase from Alcanivorax borkumensis (strain ATCC 700651 / DSM 11573 / NCIMB 13689 / SK2).